The primary structure comprises 798 residues: Putative antiporter subunit mnhA2 (798 aa).

The next 21 membrane-spanning stretches (helical) occupy residues 1–21 (MSLV…LFTL), 33–53 (IALL…PSVM), 78–98 (GLSL…VYYA), 109–129 (LPRF…IVTA), 133–153 (ILMY…IVYW), 167–187 (FMIT…IYIV), 209–229 (FIPI…QFPF), 241–261 (TPVS…FLLF), 272–292 (FYIY…AVNA), 300–320 (AILA…VGLG), 337–357 (MILF…GALF), 381–401 (VFPI…GIPF), 431–451 (IITV…VYMI), 472–492 (PFLF…IFFI), 526–546 (GFNL…IMAL), 593–613 (ITIT…QAGF), 625–645 (GPIE…LTFI), 649–669 (LTMV…FILM), 674–694 (LALT…VSFS), 710–730 (AVKI…VFIA), and 766–786 (IDTL…YTLL).

The protein belongs to the CPA3 antiporters (TC 2.A.63) subunit A family. May form a heterooligomeric complex that consists of seven subunits: mnhA2, mnhB2, mnhC2, mnhD2, mnhE2, mnhF2 and mnhG2.

Its subcellular location is the cell membrane. The chain is Putative antiporter subunit mnhA2 (mnhA2) from Staphylococcus saprophyticus subsp. saprophyticus (strain ATCC 15305 / DSM 20229 / NCIMB 8711 / NCTC 7292 / S-41).